We begin with the raw amino-acid sequence, 140 residues long: Probable disulfide formation protein C 2 (140 aa).

Residues 6-25 (KYHIAIAWTIATSAMLISLI) form a helical membrane-spanning segment. A disulfide bridge connects residues Cys-35 and Cys-38. The next 2 membrane-spanning stretches (helical) occupy residues 40 to 59 (YQRM…MYRK) and 66 to 83 (YAFP…YQIT). Cys-95 and Cys-101 are disulfide-bonded. Residues 110–134 (GFISIPMLSFVGFLAIIILLYINQI) form a helical membrane-spanning segment.

It belongs to the DsbB family. BdbC subfamily.

The protein resides in the cell membrane. Required for disulfide bond formation in some proteins. This Bacillus anthracis protein is Probable disulfide formation protein C 2 (bdbC2).